Consider the following 116-residue polypeptide: uncharacterized protein (116 aa).

The protein belongs to the mimivirus L15/L51/R83 family.

This is an uncharacterized protein from Acanthamoeba polyphaga mimivirus (APMV).